The following is a 225-amino-acid chain: Peptidyl-tRNA hydrolase (225 aa).

Residue tyrosine 14 coordinates tRNA. Histidine 19 acts as the Proton acceptor in catalysis. TRNA contacts are provided by phenylalanine 64, asparagine 66, and asparagine 112. A disordered region spans residues 184 to 225 (ALRMQPPKPEKPKPAAKAPEAQAPEAAPDARSALQKLADRFR). A compositionally biased stretch (low complexity) spans 198-210 (AAKAPEAQAPEAA).

Belongs to the PTH family. Monomer.

It is found in the cytoplasm. The catalysed reaction is an N-acyl-L-alpha-aminoacyl-tRNA + H2O = an N-acyl-L-amino acid + a tRNA + H(+). Functionally, hydrolyzes ribosome-free peptidyl-tRNAs (with 1 or more amino acids incorporated), which drop off the ribosome during protein synthesis, or as a result of ribosome stalling. Catalyzes the release of premature peptidyl moieties from peptidyl-tRNA molecules trapped in stalled 50S ribosomal subunits, and thus maintains levels of free tRNAs and 50S ribosomes. This Cereibacter sphaeroides (strain KD131 / KCTC 12085) (Rhodobacter sphaeroides) protein is Peptidyl-tRNA hydrolase.